A 211-amino-acid polypeptide reads, in one-letter code: Lipoprotein signal peptidase (211 aa).

Helical transmembrane passes span 12–32 (LLAL…YLAV), 96–116 (AFRN…ILHY), and 127–147 (LQVA…DRLA). Active-site residues include Asp-153 and Asp-174. The chain crosses the membrane as a helical span at residues 167–187 (WPTFNIADSLIVVGVALLVLH).

This sequence belongs to the peptidase A8 family.

Its subcellular location is the cell inner membrane. It catalyses the reaction Release of signal peptides from bacterial membrane prolipoproteins. Hydrolyzes -Xaa-Yaa-Zaa-|-(S,diacylglyceryl)Cys-, in which Xaa is hydrophobic (preferably Leu), and Yaa (Ala or Ser) and Zaa (Gly or Ala) have small, neutral side chains.. It participates in protein modification; lipoprotein biosynthesis (signal peptide cleavage). Its function is as follows. This protein specifically catalyzes the removal of signal peptides from prolipoproteins. In Anaeromyxobacter sp. (strain Fw109-5), this protein is Lipoprotein signal peptidase.